The following is a 231-amino-acid chain: Caspase-like protein (231 aa).

It belongs to the peptidase C14A family.

This Trichoplusia ni ascovirus 2c (TnAV-2c) protein is Caspase-like protein.